The sequence spans 363 residues: GDSL esterase/lipase At2g24560 (363 aa).

The N-terminal stretch at 1–22 (MSTSKTITFTLFIAALLSSCDA) is a signal peptide. An N-linked (GlcNAc...) asparagine glycan is attached at Asn-25. The Nucleophile role is filled by Ser-41. N-linked (GlcNAc...) asparagine glycans are attached at residues Asn-103 and Asn-325. Catalysis depends on residues Asp-333 and His-336.

The protein belongs to the 'GDSL' lipolytic enzyme family.

It localises to the secreted. In Arabidopsis thaliana (Mouse-ear cress), this protein is GDSL esterase/lipase At2g24560.